Reading from the N-terminus, the 294-residue chain is Phosphatidylserine decarboxylase proenzyme (294 aa).

Catalysis depends on charge relay system; for autoendoproteolytic cleavage activity residues Asp88, His145, and Ser248. The active-site Schiff-base intermediate with substrate; via pyruvic acid; for decarboxylase activity is the Ser248. At Ser248 the chain carries Pyruvic acid (Ser); by autocatalysis.

It belongs to the phosphatidylserine decarboxylase family. PSD-B subfamily. Prokaryotic type I sub-subfamily. Heterodimer of a large membrane-associated beta subunit and a small pyruvoyl-containing alpha subunit. It depends on pyruvate as a cofactor. In terms of processing, is synthesized initially as an inactive proenzyme. Formation of the active enzyme involves a self-maturation process in which the active site pyruvoyl group is generated from an internal serine residue via an autocatalytic post-translational modification. Two non-identical subunits are generated from the proenzyme in this reaction, and the pyruvate is formed at the N-terminus of the alpha chain, which is derived from the carboxyl end of the proenzyme. The autoendoproteolytic cleavage occurs by a canonical serine protease mechanism, in which the side chain hydroxyl group of the serine supplies its oxygen atom to form the C-terminus of the beta chain, while the remainder of the serine residue undergoes an oxidative deamination to produce ammonia and the pyruvoyl prosthetic group on the alpha chain. During this reaction, the Ser that is part of the protease active site of the proenzyme becomes the pyruvoyl prosthetic group, which constitutes an essential element of the active site of the mature decarboxylase.

It localises to the cell membrane. It carries out the reaction a 1,2-diacyl-sn-glycero-3-phospho-L-serine + H(+) = a 1,2-diacyl-sn-glycero-3-phosphoethanolamine + CO2. The protein operates within phospholipid metabolism; phosphatidylethanolamine biosynthesis; phosphatidylethanolamine from CDP-diacylglycerol: step 2/2. In terms of biological role, catalyzes the formation of phosphatidylethanolamine (PtdEtn) from phosphatidylserine (PtdSer). The chain is Phosphatidylserine decarboxylase proenzyme from Herminiimonas arsenicoxydans.